Consider the following 505-residue polypeptide: RNA-splicing ligase RtcB homolog (505 aa).

Mn(2+)-binding residues include Asp119, Cys122, His227, His259, and His353. A GMP-binding site is contributed by 226-230 (NHYAE). Residues 353-354 (HN), 402-405 (GGSM), Ser409, 428-431 (HGAG), and Lys504 each bind GMP. Catalysis depends on His428, which acts as the GMP-histidine intermediate.

This sequence belongs to the RtcB family. As to quaternary structure, catalytic component of the tRNA-splicing ligase complex. Mn(2+) is required as a cofactor.

It is found in the nucleus. The protein resides in the cytoplasm. The enzyme catalyses a 3'-end 3'-phospho-ribonucleotide-RNA + a 5'-end dephospho-ribonucleoside-RNA + GTP = a ribonucleotidyl-ribonucleotide-RNA + GMP + diphosphate. It catalyses the reaction a 3'-end 2',3'-cyclophospho-ribonucleotide-RNA + a 5'-end dephospho-ribonucleoside-RNA + GTP + H2O = a ribonucleotidyl-ribonucleotide-RNA + GMP + diphosphate + H(+). In terms of biological role, catalytic subunit of the tRNA-splicing ligase complex that acts by directly joining spliced tRNA halves to mature-sized tRNAs. Required for the ligation of mRNAs and specifically, regulates xbp-1 mRNA splicing during the endoplasmic reticulum stress-induced unfolded protein response. Has a neuroprotective role in the age-dependent degeneration of dopamine neurons, which is mediated by xbp-1. The protein is RNA-splicing ligase RtcB homolog of Caenorhabditis elegans.